The primary structure comprises 343 residues: T-cell immunoglobulin and mucin domain-containing protein 4 (343 aa).

The first 22 residues, 1–22 (MSKGLLLLWLVTELWWLYLTPA), serve as a signal peptide directing secretion. Positions 23–128 (ASEDTIIGFL…WFNDVKKNVR (106 aa)) constitute an Ig-like V-type domain. Residues 23–279 (ASEDTIIGFL…KSHQINSRQT (257 aa)) are Extracellular-facing. 3 disulfides stabilise this stretch: Cys-40/Cys-112, Cys-53/Cys-64, and Cys-59/Cys-111. N-linked (GlcNAc...) asparagine glycosylation occurs at Asn-220. The tract at residues 239 to 258 (TGSNPGILPSTSQLTTQKTT) is disordered. The span at 248–258 (STSQLTTQKTT) shows a compositional bias: low complexity. A helical membrane pass occupies residues 280 to 300 (ILIIACCVGFVLMVLLFLAFL). The Cytoplasmic segment spans residues 301 to 343 (LRGKVTGANCLQRHKRPDNTEDSDSVLNDMSHGRDDEDGIFTL). Residues 313–343 (RHKRPDNTEDSDSVLNDMSHGRDDEDGIFTL) are disordered. Residues Ser-323, Ser-325, and Ser-331 each carry the phosphoserine modification.

Belongs to the immunoglobulin superfamily. TIM family. As to quaternary structure, homodimer. As to expression, predominantly expressed in lymphoid tissues, such as spleen, lymph nodes, and Peyer patches. Also expressed in fetal liver, salivary gland, and spleen stromal cells, predominantly in the marginal zone and to a lesser extent throughout the white pulp. Not expressed in bone marrow-derived cells. Expressed mainly by antigen presenting cells (APCs) in T- and B-cell areas, but not by T- or B-lymphocytes.

It localises to the membrane. Functionally, phosphatidylserine receptor that plays different role in immune response including phagocytosis of apoptotic cells and T-cell regulation. Controls T-cell activation in a bimodal fashion, decreasing the activation of naive T-cells by inducing cell cycle arrest, while increasing proliferation of activated T-cells by activating AKT1 and ERK1/2 phosphorylations and subsequent signaling pathways. Also plays a role in efferocytosis which is the process by which apoptotic cells are removed by phagocytic cells. Mechanistically, promotes the engulfment of apoptotic cells or exogenous particles by securing them to phagocytes through direct binding to phosphatidylserine present on apoptotic cells, while other engulfment receptors such as MERTK efficiently recognize apoptotic cells and mediate their ingestion. Additionally, promotes autophagy process by suppressing NLRP3 inflammasome activity via activation of STK11/PRKAA1 pathway in a phosphatidylserine-dependent mechanism. This Mus musculus (Mouse) protein is T-cell immunoglobulin and mucin domain-containing protein 4 (Timd4).